Reading from the N-terminus, the 425-residue chain is Gamma-glutamyl phosphate reductase (425 aa).

This sequence belongs to the gamma-glutamyl phosphate reductase family.

The protein localises to the cytoplasm. The catalysed reaction is L-glutamate 5-semialdehyde + phosphate + NADP(+) = L-glutamyl 5-phosphate + NADPH + H(+). It participates in amino-acid biosynthesis; L-proline biosynthesis; L-glutamate 5-semialdehyde from L-glutamate: step 2/2. Functionally, catalyzes the NADPH-dependent reduction of L-glutamate 5-phosphate into L-glutamate 5-semialdehyde and phosphate. The product spontaneously undergoes cyclization to form 1-pyrroline-5-carboxylate. The polypeptide is Gamma-glutamyl phosphate reductase (Aromatoleum aromaticum (strain DSM 19018 / LMG 30748 / EbN1) (Azoarcus sp. (strain EbN1))).